Reading from the N-terminus, the 245-residue chain is 4-hydroxy-tetrahydrodipicolinate reductase (245 aa).

NAD(+) contacts are provided by residues 7–12 (GAKGKV), 75–77 (GTT), and 102–105 (APNF). Residue His-132 is the Proton donor/acceptor of the active site. Position 133 (His-133) interacts with (S)-2,3,4,5-tetrahydrodipicolinate. The active-site Proton donor is the Lys-136. (S)-2,3,4,5-tetrahydrodipicolinate is bound at residue 142–143 (GT).

It belongs to the DapB family.

The protein localises to the cytoplasm. It catalyses the reaction (S)-2,3,4,5-tetrahydrodipicolinate + NAD(+) + H2O = (2S,4S)-4-hydroxy-2,3,4,5-tetrahydrodipicolinate + NADH + H(+). It carries out the reaction (S)-2,3,4,5-tetrahydrodipicolinate + NADP(+) + H2O = (2S,4S)-4-hydroxy-2,3,4,5-tetrahydrodipicolinate + NADPH + H(+). It functions in the pathway amino-acid biosynthesis; L-lysine biosynthesis via DAP pathway; (S)-tetrahydrodipicolinate from L-aspartate: step 4/4. Functionally, catalyzes the conversion of 4-hydroxy-tetrahydrodipicolinate (HTPA) to tetrahydrodipicolinate. This Mycobacterium marinum (strain ATCC BAA-535 / M) protein is 4-hydroxy-tetrahydrodipicolinate reductase.